A 241-amino-acid polypeptide reads, in one-letter code: DVSFSLSGSSSTSYSKFIGALRKALPSNGTVYNITLLLSSASGASRYTLMKLSNYDGKAITVAIDVTNVYIMGYLVNSTSYFFNESDAKLASQYVFAGSTIVTLPYSGNYEKLQTAAGKIREKIPLGFPALDSAITTLFHYDSTAAAAAFLVIIQTTAESSRFKYIEGQIIMRISKNGVPSLATISLENEWSALSKQIQLAQTNNGTFKTPVVIMDAGGQRVEIGNVGSKVVTKNIQLLLN.

N-linked (GlcNAc...) asparagine glycans are attached at residues N28, N33, N77, and N84. E159 is an active-site residue. N-linked (GlcNAc...) asparagine glycosylation occurs at N205.

The protein belongs to the ribosome-inactivating protein family. Type 1 RIP subfamily.

It catalyses the reaction Endohydrolysis of the N-glycosidic bond at one specific adenosine on the 28S rRNA.. The chain is Ribosome-inactivating protein luffaculin 1 from Luffa acutangula (Ridged gourd).